The primary structure comprises 473 residues: H(+)/Cl(-) exchange transporter ClcA (473 aa).

Residues 1 to 32 (MKTDTPSLETPQAARLRRRQLIRQLLERDKTP) are Cytoplasmic-facing. Residues 33-69 (LAILFMAAVVGTLVGLAAVAFDKGVAWLQNQRMGALV) form a helical membrane-spanning segment. The Periplasmic segment spans residues 70-76 (HTADNYP). The chain crosses the membrane as a helical span at residues 77 to 100 (LLLTVAFLCSAVLAMFGYFLVRKY). The Selectivity filter part_1 motif lies at 106–110 (GSGIP). Residue Ser107 coordinates chloride. The helical intramembrane region spans 109-116 (IPEIEGAL). The Cytoplasmic portion of the chain corresponds to 117-123 (EDQRPVR). Transmembrane regions (helical) follow at residues 124 to 141 (WWRV…TLGG) and 148 to 166 (EGPT…LDVF). Positions 146 to 150 (GREGP) match the Selectivity filter part_2 motif. Over 167–176 (RLKGDEARHT) the chain is Cytoplasmic. 2 consecutive intramembrane regions (helical) follow at residues 177 to 189 (LLAT…LAAA) and 193 to 201 (PLAGILFII). Topologically, residues 202-214 (EEMRPQFRYTLIS) are cytoplasmic. A helical transmembrane segment spans residues 215–232 (IKAVFIGVIMSTIMYRIF). Residues 233 to 252 (NHEVALIDVGKLSDAPLNTL) are Periplasmic-facing. The chain crosses the membrane as a helical span at residues 253–281 (WLYLILGIIFGIFGPIFNKWVLGMQDLLH). Topologically, residues 282 to 287 (RVHGGN) are cytoplasmic. Residues 288–309 (ITKWVLMGGAIGGLCGLLGFVA) traverse the membrane as a helical segment. At 310–329 (PATSGGGFNLIPIATAGNFS) the chain is on the periplasmic side. The next 2 membrane-spanning stretches (helical) occupy residues 330–349 (MGML…LCFS) and 355–376 (GIFA…MVAV). The Selectivity filter part_3 motif lies at 355–359 (GIFAP). Chloride contacts are provided by Ile356 and Phe357. Topologically, residues 377-386 (ELFPQYHLEA) are periplasmic. Residues 387-401 (GTFAIAGMGALLAAS) constitute an intramembrane region (helical). The note=Loop between two helices intramembrane region spans 402–404 (IRA). Residues 405–416 (PLTGIILVLEMT) constitute an intramembrane region (helical). Positions 417-421 (DNYQL) form an intramembrane region, note=Loop between two helices. Residues 422 to 438 (ILPMIITGLGATLLAQF) form a helical membrane-spanning segment. Residues 439 to 473 (TGGKPLYSAILARTLAKQEAEQLARSKAASASENT) are Cytoplasmic-facing. Tyr445 lines the chloride pocket.

The protein belongs to the chloride channel (TC 2.A.49) family. ClcA subfamily. In terms of assembly, homodimer.

Its subcellular location is the cell inner membrane. The enzyme catalyses 2 chloride(in) + H(+)(out) = 2 chloride(out) + H(+)(in). Its function is as follows. Proton-coupled chloride transporter. Functions as antiport system and exchanges two chloride ions for 1 proton. Probably acts as an electrical shunt for an outwardly-directed proton pump that is linked to amino acid decarboxylation, as part of the extreme acid resistance (XAR) response. In Escherichia coli O157:H7, this protein is H(+)/Cl(-) exchange transporter ClcA.